The following is a 304-amino-acid chain: Cytochrome c biogenesis protein CcsA (304 aa).

8 helical membrane-spanning segments follow: residues 11–31 (SLGFAGFVLLLLAMPLAFWAV), 37–57 (AGLVRLLVAVANLLFTAQLIL), 63–83 (GHFPISNLYESLCFLAWACTL), 96–116 (IVAAAATPMGLGCIAFASFAL), 141–161 (VIMVSYAALLVGSLLSLAVLV), 212–232 (TITVGFLMLTVGIVSGAVWAN), 246–263 (TWALICWLVYAAYLHTRL), and 275–295 (VAVVGLVVIAVCYIGVNLLGI).

This sequence belongs to the CcmF/CycK/Ccl1/NrfE/CcsA family. In terms of assembly, may interact with ccs1.

It is found in the cellular thylakoid membrane. Required during biogenesis of c-type cytochromes (cytochrome c6 and cytochrome f) at the step of heme attachment. The polypeptide is Cytochrome c biogenesis protein CcsA (Synechococcus sp. (strain CC9605)).